We begin with the raw amino-acid sequence, 786 residues long: Cadherin-9 (786 aa).

The N-terminal stretch at 1-21 (MRTYSCLQLVIWTCIFHMVDN) is a signal peptide. An N-linked (GlcNAc...) asparagine glycan is attached at Asn21. Residues 22-52 (STLQGKDSSHFLRRIVNLKKDEGKMLHRAKR) constitute a propeptide that is removed on maturation. Over 22–614 (STLQGKDSSH…MLAAGLSTGA (593 aa)) the chain is Extracellular. Cadherin domains are found at residues 54 to 158 (WMWN…EPKF), 159 to 267 (TKDL…PPRF), 268 to 382 (PQST…PPVF), 383 to 487 (SKLS…APEF), and 487 to 604 (FATY…AEAL). Asn254 is a glycosylation site (N-linked (GlcNAc...) asparagine). N-linked (GlcNAc...) asparagine glycans are attached at residues Asn454 and Asn535. A helical membrane pass occupies residues 615 to 635 (LIAILLCVVILLTLIVLFAAL). The Cytoplasmic portion of the chain corresponds to 636–786 (KRQRKKEPLI…AEMYGGNDSD (151 aa)). The residue at position 785 (Ser785) is a Phosphoserine.

Its subcellular location is the cell membrane. In terms of biological role, cadherins are calcium-dependent cell adhesion proteins. They preferentially interact with themselves in a homophilic manner in connecting cells; cadherins may thus contribute to the sorting of heterogeneous cell types. This chain is Cadherin-9 (Cdh9), found in Mus musculus (Mouse).